A 564-amino-acid polypeptide reads, in one-letter code: Histone acetyltransferase rtt109 (564 aa).

Acetyl-CoA-binding positions include phenylalanine 138, 157-159 (HVL), and tryptophan 167. The active-site Proton donor/acceptor is aspartate 261. Lysine 263 bears the N6-acetyllysine; by autocatalysis mark. Disordered regions lie at residues 355 to 420 (YDKV…NAFY) and 506 to 549 (RKKD…ESPG). Low complexity predominate over residues 366–377 (AVSVSTDSQSSD). Polar residues-rich tracts occupy residues 394 to 417 (DPST…TDQN) and 512 to 521 (SQATTATSAQ). The segment covering 529-544 (GTVSTAVTAEASTTGT) has biased composition (low complexity).

Belongs to the RTT109 family.

It localises to the nucleus. The protein resides in the vacuole. It catalyses the reaction L-lysyl-[protein] + acetyl-CoA = N(6)-acetyl-L-lysyl-[protein] + CoA + H(+). The enzyme catalyses L-lysyl-[histone] + acetyl-CoA = N(6)-acetyl-L-lysyl-[histone] + CoA + H(+). Histone chaperone-dependent acetylase that modifies 'Lys-56' of histone H3 (H3K56ac). Histone H3 'Lys-56' acetylation may be required for S-phase-linked DNA damage tolerance. Also acetylates 'Lys-9' of histone H3 (H3K9ac). Autoacetylates. The protein is Histone acetyltransferase rtt109 of Aspergillus flavus.